The following is a 407-amino-acid chain: Argininosuccinate synthase (407 aa).

ATP contacts are provided by residues Ala-12 to Ser-20 and Ala-39. Residues Tyr-92 and Ser-97 each coordinate L-citrulline. Gly-122 is a binding site for ATP. Residues Thr-124, Asn-128, and Asp-129 each contribute to the L-aspartate site. Asn-128 is an L-citrulline binding site. L-citrulline is bound by residues Arg-132, Ser-183, Ser-192, Glu-268, and Tyr-280.

Belongs to the argininosuccinate synthase family. Type 1 subfamily. In terms of assembly, homotetramer.

It is found in the cytoplasm. The catalysed reaction is L-citrulline + L-aspartate + ATP = 2-(N(omega)-L-arginino)succinate + AMP + diphosphate + H(+). It participates in amino-acid biosynthesis; L-arginine biosynthesis; L-arginine from L-ornithine and carbamoyl phosphate: step 2/3. The chain is Argininosuccinate synthase from Caulobacter sp. (strain K31).